Consider the following 647-residue polypeptide: Auxin efflux carrier component 2 (647 aa).

At 1-7 (MITGKDM) the chain is on the extracellular side. A helical membrane pass occupies residues 8–28 (YDVLAAMVPLYVAMILAYGSV). Residues 29-38 (RWWGIFTPDQ) lie on the Cytoplasmic side of the membrane. Residues 39–59 (CSGINRFVAVFAVPLLSFHFI) traverse the membrane as a helical segment. (indol-3-yl)acetate is bound at residue Val51. Residues 60–68 (SSNDPYAMN) are Extracellular-facing. Residues 69–89 (YHFLAADSLQKVVILAALFLW) form a helical membrane-spanning segment. Residues 90–100 (QAFSRRGSLEW) lie on the Cytoplasmic side of the membrane. The chain crosses the membrane as a helical span at residues 101 to 121 (MITLFSLSTLPNTLVMGIPLL). (indol-3-yl)acetate contacts are provided by Asn112 and Leu114. At 122 to 131 (RAMYGDFSGN) the chain is on the extracellular side. A helical transmembrane segment spans residues 132 to 152 (LMVQIVVLQSIIWYTLMLFLF). Residue Tyr145 participates in (indol-3-yl)acetate binding. Topologically, residues 153–507 (EFRGAKLLIS…LIRNPNTYSS (355 aa)) are cytoplasmic. Phosphoserine occurs at positions 237, 258, and 310. Positions 339–380 (SVPSYPPPNPMFTGSTSGASGVKKKESGGGGSGGGVGVGGQN) are disordered. Thr354 is modified (phosphothreonine). The span at 366–378 (GGGGSGGGVGVGG) shows a compositional bias: gly residues. Residue Ser393 is modified to Phosphoserine. 2 disordered regions span residues 397-420 (EANA…KVSI) and 440-481 (PGRK…QQMP). Residues 508-528 (LFGLAWSLVSFKWNIKMPTIM) traverse the membrane as a helical segment. The Extracellular portion of the chain corresponds to 529–531 (SGS). A helical transmembrane segment spans residues 532–552 (ISILSDAGLGMAMFSLGLFMA). The Cytoplasmic segment spans residues 553-568 (LQPKIIACGKSVAGFA). Residues 569 to 589 (MAVRFLTGPAVIAATSIAIGI) form a helical membrane-spanning segment. The Extracellular portion of the chain corresponds to 590 to 592 (RGD). Residues 593 to 613 (LLHIAIVQAALPQGIVPFVFA) traverse the membrane as a helical segment. Residues Ile607 and Val608 each contribute to the (indol-3-yl)acetate site. Residues 614 to 626 (KEYNVHPDILSTA) are Cytoplasmic-facing. Residues 627-647 (VIFGMLVALPVTVLYYVLLGL) traverse the membrane as a helical segment.

It belongs to the auxin efflux carrier (TC 2.A.69.1) family. In terms of assembly, homodimer. Interacts with FYPP1 and FYPP3. Component of a complex made of PINs (e.g. PIN1 and PIN2), MAB4/MELs (e.g. NPY1/MAB4 and NPY5/MEL1) and AGC kinases (e.g. D6PK and PID) at the plasma membrane. Binds directly to NPY1/MAB4, NPY5/MEL1 and PID. As to expression, root-specific. Localized to the cortex, epidermis and lateral root cap, predominantly at the upper side of cells.

It is found in the cell membrane. In terms of biological role, acts as a component of the auxin efflux carrier. Seems to be involved in the root-specific auxin transport, and mediates the root gravitropism. Its particular localization suggests a role in the translocation of auxin towards the elongation zone. Recrutes NPY proteins (e.g. NPY1/MAB4 and NPY5/MEL1) to the plasma membrane in a polar basal localization in root epidermis; this activity is optimized by AGC kinases-mediated (e.g. D6PK and PID) phosphorylation that limits their lateral diffusion-based escape. The protein is Auxin efflux carrier component 2 of Arabidopsis thaliana (Mouse-ear cress).